The chain runs to 197 residues: Inosine triphosphate pyrophosphatase (197 aa).

10 to 15 (TGNANK) provides a ligand contact to ITP. Glutamate 45 is a Mg(2+) binding site. ITP is bound by residues lysine 58, 76–77 (DT), lysine 93, 151–154 (FGWD), lysine 175, and 180–181 (HR).

The protein belongs to the HAM1 NTPase family. Homodimer. Requires Mg(2+) as cofactor. It depends on Mn(2+) as a cofactor.

It localises to the cytoplasm. The protein localises to the nucleus. The enzyme catalyses ITP + H2O = IMP + diphosphate + H(+). It catalyses the reaction dITP + H2O = dIMP + diphosphate + H(+). It carries out the reaction XTP + H2O = XMP + diphosphate + H(+). The catalysed reaction is N(6)-hydroxy-dATP + H2O = N(6)-hydroxy-dAMP + diphosphate + H(+). Pyrophosphatase that hydrolyzes the non-canonical purine nucleotides inosine triphosphate (ITP), deoxyinosine triphosphate (dITP) as well as 2'-deoxy-N-6-hydroxylaminopurine triphosphate (dHAPTP) and 5-bromodeoxyuridine 5'-triphosphate (BrdUTP) to their respective monophosphate derivatives. Xanthosine 5'-triphosphate (XTP) is also a potential substrate. The enzyme does not distinguish between the deoxy- and ribose forms. Probably excludes non-canonical purines from RNA and DNA precursor pools, thus preventing their incorporation into RNA and DNA and avoiding chromosomal lesions. The polypeptide is Inosine triphosphate pyrophosphatase (Saccharomyces cerevisiae (strain ATCC 204508 / S288c) (Baker's yeast)).